A 528-amino-acid chain; its full sequence is GMP synthase [glutamine-hydrolyzing] (528 aa).

One can recognise a Glutamine amidotransferase type-1 domain in the interval 13–204; sequence AIVILDFGSQ…VNHICGCEQD (192 aa). The active-site Nucleophile is cysteine 90. Catalysis depends on residues histidine 178 and glutamate 180. A GMPS ATP-PPase domain is found at 205-403; the sequence is WTTNAFIDEA…LGLPEEIVRR (199 aa). 232 to 238 lines the ATP pocket; sequence SGGVDSS.

In terms of assembly, homodimer.

It catalyses the reaction XMP + L-glutamine + ATP + H2O = GMP + L-glutamate + AMP + diphosphate + 2 H(+). It functions in the pathway purine metabolism; GMP biosynthesis; GMP from XMP (L-Gln route): step 1/1. In terms of biological role, catalyzes the synthesis of GMP from XMP. This chain is GMP synthase [glutamine-hydrolyzing], found in Synechococcus sp. (strain CC9902).